A 285-amino-acid polypeptide reads, in one-letter code: 4-hydroxybenzoate octaprenyltransferase (285 aa).

Helical transmembrane passes span 20 to 39 (GSYL…AQGL), 92 to 112 (ALGL…ALNW), 137 to 157 (FPQV…FMAV), 159 to 179 (EAVP…TVAY), 206 to 226 (YDRL…LGMG), 228 to 248 (YLGF…LFIH), and 260 to 280 (ACFS…LGIA).

The protein belongs to the UbiA prenyltransferase family. Mg(2+) serves as cofactor.

The protein resides in the cell inner membrane. It catalyses the reaction all-trans-octaprenyl diphosphate + 4-hydroxybenzoate = 4-hydroxy-3-(all-trans-octaprenyl)benzoate + diphosphate. It functions in the pathway cofactor biosynthesis; ubiquinone biosynthesis. Its function is as follows. Catalyzes the prenylation of para-hydroxybenzoate (PHB) with an all-trans polyprenyl group. Mediates the second step in the final reaction sequence of ubiquinone-8 (UQ-8) biosynthesis, which is the condensation of the polyisoprenoid side chain with PHB, generating the first membrane-bound Q intermediate 3-octaprenyl-4-hydroxybenzoate. This Pseudoalteromonas atlantica (strain T6c / ATCC BAA-1087) protein is 4-hydroxybenzoate octaprenyltransferase.